Here is a 906-residue protein sequence, read N- to C-terminus: Cadherin-2 (906 aa).

The signal sequence occupies residues 1-25; sequence MCRIAGALRTLLPLLAALLQASVEA. Residues 26-159 constitute a propeptide that is removed on maturation; the sequence is SGEIALCKTG…HSGHLQRQKR (134 aa). Phosphoserine; by FAM20C occurs at positions 96 and 135. Cadherin domains lie at 160–267, 268–382, 383–497, 498–603, and 604–714; these read DWVI…RPEF, LHQV…PPEF, TAMT…NPYF, APNP…DNAP, and QVLP…DVDR. Topologically, residues 160–724 are extracellular; the sequence is DWVIPPINLP…IVGAGLGTGA (565 aa). Residue Glu-170 coordinates Ca(2+). N-linked (GlcNAc...) asparagine glycosylation is present at Asn-190. Residues Asp-226, Glu-228, Asp-259, Met-260, Asn-261, Asp-262, and Asn-263 each contribute to the Ca(2+) site. Asn-273 carries an N-linked (GlcNAc...) asparagine glycan. Ca(2+) is bound by residues Asp-293, Asp-295, and Asn-301. N-linked (GlcNAc...) asparagine glycosylation occurs at Asn-325. Asp-353 contributes to the Ca(2+) binding site. N-linked (GlcNAc...) asparagine glycans are attached at residues Asn-402, Asn-572, Asn-651, and Asn-692. Residues 725-745 form a helical membrane-spanning segment; it reads IIAILLCIIILLILVLMFVVW. The Cytoplasmic portion of the chain corresponds to 746–906; the sequence is MKRRDKERQA…LADMYGGGDD (161 aa). Positions 863–880 are enriched in low complexity; the sequence is SGSTAGSLSSLNSSSSGG. The disordered stretch occupies residues 863–884; it reads SGSTAGSLSSLNSSSSGGEQDY.

Homodimer (via extracellular region). Can also form heterodimers with other cadherins (via extracellular region). Dimerization occurs in trans, i.e. with a cadherin chain from another cell. Interacts with CDCP1. Interacts with PCDH8; this complex may also include TAOK2. The interaction with PCDH8 may lead to internalization through TAOK2/p38 MAPK pathway. Identified in a complex containing FGFR4, NCAM1, CDH2, PLCG1, FRS2, SRC, SHC1, GAP43 and CTTN. May interact with OBSCN (via protein kinase domain 2). Interacts with FBXO45. Cleaved by MMP24. Ectodomain cleavage leads to the generation of a soluble 90 kDa N-terminal soluble fragment and a 45 kDa membrane-bound C-terminal fragment 1 (CTF1), which is further cleaved by gamma-secretase into a 35 kDa. Cleavage in neural stem cells by MMP24 affects CDH2-mediated anchorage of neural stem cells to ependymocytes in the adult subependymal zone, leading to modulate neural stem cell quiescence. Post-translationally, may be phosphorylated by OBSCN.

It localises to the cell membrane. The protein localises to the sarcolemma. The protein resides in the cell junction. It is found in the cell surface. Its subcellular location is the desmosome. It localises to the adherens junction. In terms of biological role, calcium-dependent cell adhesion protein; preferentially mediates homotypic cell-cell adhesion by dimerization with a CDH2 chain from another cell. Cadherins may thus contribute to the sorting of heterogeneous cell types. Acts as a regulator of neural stem cells quiescence by mediating anchorage of neural stem cells to ependymocytes in the adult subependymal zone: upon cleavage by MMP24, CDH2-mediated anchorage is affected, leading to modulate neural stem cell quiescence. Plays a role in cell-to-cell junction formation between pancreatic beta cells and neural crest stem (NCS) cells, promoting the formation of processes by NCS cells. Required for proper neurite branching. Required for pre- and postsynaptic organization. CDH2 may be involved in neuronal recognition mechanism. In hippocampal neurons, may regulate dendritic spine density. This is Cadherin-2 (CDH2) from Homo sapiens (Human).